Reading from the N-terminus, the 744-residue chain is Adenosylcobalamin-dependent ribonucleoside-triphosphate reductase (744 aa).

The cysteines at positions 120 and 424 are disulfide-linked. Residues 148 to 159 (SMPFSFLFDQLM) are effector region-1. The interval 169–318 (VDDNINQIPQ…ICNLIGKTVV (150 aa)) is effector region-2. Active-site residues include cysteine 413 and glutamate 415. The tract at residues 570 to 631 (FHYAGYLIQR…SKNFASAGTV (62 aa)) is adenosylcobalamin-binding-1. Positions 690 to 729 (LKQAPKEPINKKAYEDRVAMITGDVKEVFENQNKDQKGLE) are adenosylcobalamin-binding-2.

This sequence belongs to the class II ribonucleoside-triphosphate reductase family. As to quaternary structure, monomer. Requires adenosylcob(III)alamin as cofactor.

It carries out the reaction a 2'-deoxyribonucleoside 5'-triphosphate + [thioredoxin]-disulfide + H2O = a ribonucleoside 5'-triphosphate + [thioredoxin]-dithiol. With respect to regulation, allosterically regulated by ATP and dNTP. The protein is Adenosylcobalamin-dependent ribonucleoside-triphosphate reductase (rtpR) of Lactobacillus helveticus (strain DPC 4571).